The sequence spans 116 residues: UPF0102 protein PERMA_0362 (116 aa).

It belongs to the UPF0102 family.

This is UPF0102 protein PERMA_0362 from Persephonella marina (strain DSM 14350 / EX-H1).